The primary structure comprises 357 residues: Peptide chain release factor 1 (357 aa).

Glutamine 232 bears the N5-methylglutamine mark. Residues aspartate 281–arginine 305 are compositionally biased toward basic and acidic residues. Residues aspartate 281 to phenylalanine 309 form a disordered region.

This sequence belongs to the prokaryotic/mitochondrial release factor family. In terms of processing, methylated by PrmC. Methylation increases the termination efficiency of RF1.

It is found in the cytoplasm. Its function is as follows. Peptide chain release factor 1 directs the termination of translation in response to the peptide chain termination codons UAG and UAA. In Nitratidesulfovibrio vulgaris (strain DSM 19637 / Miyazaki F) (Desulfovibrio vulgaris), this protein is Peptide chain release factor 1.